A 225-amino-acid polypeptide reads, in one-letter code: Orotate phosphoribosyltransferase (225 aa).

Residue K31 participates in 5-phospho-alpha-D-ribose 1-diphosphate binding. 39–40 (FF) contributes to the orotate binding site. 5-phospho-alpha-D-ribose 1-diphosphate is bound by residues 78-79 (YK), R105, K106, K109, H111, and 130-138 (DDVLTSGKA). Orotate-binding residues include T134 and R163.

The protein belongs to the purine/pyrimidine phosphoribosyltransferase family. PyrE subfamily. In terms of assembly, homodimer.

It carries out the reaction orotidine 5'-phosphate + diphosphate = orotate + 5-phospho-alpha-D-ribose 1-diphosphate. Its pathway is pyrimidine metabolism; UMP biosynthesis via de novo pathway; UMP from orotate: step 1/2. In terms of biological role, catalyzes the transfer of a ribosyl phosphate group from 5-phosphoribose 1-diphosphate to orotate, leading to the formation of orotidine monophosphate (OMP). In Cryptococcus neoformans var. neoformans serotype D (strain B-3501A) (Filobasidiella neoformans), this protein is Orotate phosphoribosyltransferase (URA5).